We begin with the raw amino-acid sequence, 306 residues long: Pantothenate kinase (306 aa).

91-98 (GSVAVGKS) serves as a coordination point for ATP.

It belongs to the prokaryotic pantothenate kinase family.

It is found in the cytoplasm. It carries out the reaction (R)-pantothenate + ATP = (R)-4'-phosphopantothenate + ADP + H(+). It participates in cofactor biosynthesis; coenzyme A biosynthesis; CoA from (R)-pantothenate: step 1/5. The polypeptide is Pantothenate kinase (Streptococcus pyogenes serotype M5 (strain Manfredo)).